The chain runs to 788 residues: Protein translocase subunit SecA 2 (788 aa).

ATP-binding positions include Gln-86, 104-108 (GEGKT), and Asp-493.

Belongs to the SecA family. In terms of assembly, monomer and homodimer. Part of the essential Sec protein translocation apparatus which comprises SecA, SecYEG and auxiliary proteins SecDF. Other proteins may also be involved.

Its subcellular location is the cell membrane. The protein localises to the cytoplasm. It catalyses the reaction ATP + H2O + cellular proteinSide 1 = ADP + phosphate + cellular proteinSide 2.. Its function is as follows. Part of the Sec protein translocase complex. Interacts with the SecYEG preprotein conducting channel. Has a central role in coupling the hydrolysis of ATP to the transfer of proteins into and across the cell membrane, serving as an ATP-driven molecular motor driving the stepwise translocation of polypeptide chains across the membrane. This Bacillus anthracis protein is Protein translocase subunit SecA 2.